A 211-amino-acid polypeptide reads, in one-letter code: UPF0056 membrane protein YvbG (211 aa).

Transmembrane regions (helical) follow at residues 1-21 (MMFS…NPIG), 47-67 (ILSF…FKLF), 69-89 (INIH…AYNL), 114-134 (ISVT…ATVM), 150-170 (MIGI…SAFI), and 188-208 (LILA…MFPV).

This sequence belongs to the UPF0056 (MarC) family.

The protein resides in the cell membrane. The chain is UPF0056 membrane protein YvbG (yvbG) from Bacillus subtilis (strain 168).